The chain runs to 300 residues: 4-hydroxy-tetrahydrodipicolinate synthase (300 aa).

Pyruvate is bound at residue T45. The Proton donor/acceptor role is filled by Y140. K169 functions as the Schiff-base intermediate with substrate in the catalytic mechanism. I210 is a binding site for pyruvate.

It belongs to the DapA family. In terms of assembly, homotetramer; dimer of dimers.

It localises to the cytoplasm. The catalysed reaction is L-aspartate 4-semialdehyde + pyruvate = (2S,4S)-4-hydroxy-2,3,4,5-tetrahydrodipicolinate + H2O + H(+). It functions in the pathway amino-acid biosynthesis; L-lysine biosynthesis via DAP pathway; (S)-tetrahydrodipicolinate from L-aspartate: step 3/4. Its function is as follows. Catalyzes the condensation of (S)-aspartate-beta-semialdehyde [(S)-ASA] and pyruvate to 4-hydroxy-tetrahydrodipicolinate (HTPA). The chain is 4-hydroxy-tetrahydrodipicolinate synthase from Helicobacter pylori (strain HPAG1).